The chain runs to 217 residues: tRNA (guanine-N(7)-)-methyltransferase (217 aa).

S-adenosyl-L-methionine is bound by residues Glu-56, Glu-81, Asp-108, and Asp-130. The active site involves Asp-130. Substrate is bound by residues Lys-134 and Asp-166.

Belongs to the class I-like SAM-binding methyltransferase superfamily. TrmB family.

It catalyses the reaction guanosine(46) in tRNA + S-adenosyl-L-methionine = N(7)-methylguanosine(46) in tRNA + S-adenosyl-L-homocysteine. It participates in tRNA modification; N(7)-methylguanine-tRNA biosynthesis. Its function is as follows. Catalyzes the formation of N(7)-methylguanine at position 46 (m7G46) in tRNA. This is tRNA (guanine-N(7)-)-methyltransferase from Neorickettsia sennetsu (strain ATCC VR-367 / Miyayama) (Ehrlichia sennetsu).